The primary structure comprises 41 residues: uncharacterized protein (41 aa).

This is an uncharacterized protein from Dictyostelium discoideum (Social amoeba).